Consider the following 229-residue polypeptide: Putative germin-like protein subfamily 1 member 2 (229 aa).

An N-terminal signal peptide occupies residues 1-24 (MKGLVQFLVAKIILLVLASTFVHC). A disulfide bond links Cys34 and Cys50. 2 N-linked (GlcNAc...) asparagine glycosylation sites follow: Asn38 and Asn71. A Cupin type-1 domain is found at 64 to 215 (SGLNIPGNTS…AFALDVNIVR (152 aa)). Mn(2+)-binding residues include His112 and His114. The N-linked (GlcNAc...) asparagine glycan is linked to Asn139. His163 contributes to the Mn(2+) binding site.

The protein belongs to the germin family. In terms of assembly, oligomer (believed to be a pentamer but probably hexamer).

The protein resides in the secreted. It is found in the extracellular space. The protein localises to the apoplast. Its function is as follows. May play a role in plant defense. Probably has no oxalate oxidase activity even if the active site is conserved. The chain is Putative germin-like protein subfamily 1 member 2 from Arabidopsis thaliana (Mouse-ear cress).